Reading from the N-terminus, the 660-residue chain is Secretin PulD (660 aa).

The first 27 residues, 1–27, serve as a signal peptide directing secretion; it reads MIIANVIRSFSLTLLIFAALLFRPAAA. Positions 28 to 124 are N0; that stretch reads EEFSASFKGT…VASDAAPGIG (97 aa). The segment at 126–190 is N1; sequence EVVTRVVPLT…TIVERVDNAG (65 aa). The interval 191–264 is N2; sequence DRSVVTVPLS…MIKQLDRQQA (74 aa). Residues 267–341 are N3; the sequence is GNTKVIYLKY…DLERVIAQLD (75 aa). Residues 346-596 are secretin; sequence QVLVEAIIAE…LFIRPTVIRD (251 aa). The interval 598–660 is s domain; sequence DEYRQASSGQ…IDAFNLGGNL (63 aa).

It belongs to the bacterial secretin family. GSP D subfamily. Forms a cylindrical channel with 15 subunits.

The protein resides in the cell outer membrane. In terms of biological role, involved in a type II secretion system (T2SS, formerly general secretion pathway, GSP) for the export of proteins. Required for the translocation of pullulanase. This subunit forms the outer membrane channel. This chain is Secretin PulD (pulD), found in Klebsiella pneumoniae.